A 177-amino-acid chain; its full sequence is Large ribosomal subunit protein uL5 (177 aa).

The protein belongs to the universal ribosomal protein uL5 family. In terms of assembly, part of the 50S ribosomal subunit; part of the 5S rRNA/L5/L18/L25 subcomplex. Contacts the 5S rRNA and the P site tRNA. Forms a bridge to the 30S subunit in the 70S ribosome.

Its function is as follows. This is one of the proteins that bind and probably mediate the attachment of the 5S RNA into the large ribosomal subunit, where it forms part of the central protuberance. In the 70S ribosome it contacts protein S13 of the 30S subunit (bridge B1b), connecting the 2 subunits; this bridge is implicated in subunit movement. Contacts the P site tRNA; the 5S rRNA and some of its associated proteins might help stabilize positioning of ribosome-bound tRNAs. The chain is Large ribosomal subunit protein uL5 from Ehrlichia canis (strain Jake).